A 308-amino-acid chain; its full sequence is Zinc finger CCCH domain-containing protein 15 (308 aa).

The segment at 1 to 21 (MENKIAPFSYSGSSAGNSSSG) is disordered. The segment covering 9-21 (SYSGSSAGNSSSG) has biased composition (low complexity). A coiled-coil region spans residues 56-91 (TRLHEASLEAEALRLENTELRSMNLRLKNELNSLIR). Positions 110 to 190 (LSIGGNDADE…GTVTKPGTCG (81 aa)) are disordered. Residue Ser111 is modified to Phosphoserine. Over residues 148-164 (RSSLPKSISVRSNGYSK) the composition is skewed to polar residues. 2 C3H1-type zinc fingers span residues 222–250 (MTKTELCNKWQETGTCPYGDHCQFAHGIK) and 260–288 (RYKTEVCRMVLAGDNCPYGHRCHFRHSLS).

In terms of processing, phosphorylated at Ser-111 by ASK7/BIN2 in the cytoplasm in the absence of brassinosteroids (BRs). In terms of tissue distribution, highly expressed in secondary cell wall-forming tissues and the xylem cells of roots. Expressed predominantly in inflorescence stems, flowers and siliques. Highly expressed in the basal portion of stems, where cells are undergoing secondary cell wall thickening. Highly expressed in meiocytes and tapetum from anthers.

The protein resides in the cytoplasm. It localises to the nucleus. Functionally, functions probably as a transcriptional factor that activates genes involved in secondary cell wall biosynthesis. Functions redudantly with C3H14 to regulate secondary cell wall formation. C3H14 and C3H15 have overlapping roles in the regulation of secondary cell wall formation and anther development. C3H14 may contribute more to secondary cell wall thickening while C3H15 could be more important in anther development. May regulate at both the transcriptional and post-transcriptional levels the expression of many genes involved in various biological processes, particularly those associated with cell wall metabolism and pollen development. Involved in the regulation of callose metabolism in male meiocytes, in integrity of newly formed microspores, and promotes male fertility. May be involved in the regulation of the callose synthesis genes CALS5 and CALS12, the potential degradation of callose walls-related genes A6 and MYB80, as well as other putative beta-1,3-glucanase genes. Negatively regulates cell elongation by inhibiting brassinosteroid (BR) signaling. Functions downstream of the BRI1 receptor as a negative regulator in the BR pathway. In Arabidopsis thaliana (Mouse-ear cress), this protein is Zinc finger CCCH domain-containing protein 15.